Here is a 101-residue protein sequence, read N- to C-terminus: Small ribosomal subunit protein uS14 (101 aa).

Belongs to the universal ribosomal protein uS14 family. In terms of assembly, part of the 30S ribosomal subunit. Contacts proteins S3 and S10.

Functionally, binds 16S rRNA, required for the assembly of 30S particles and may also be responsible for determining the conformation of the 16S rRNA at the A site. The polypeptide is Small ribosomal subunit protein uS14 (Actinobacillus pleuropneumoniae serotype 5b (strain L20)).